We begin with the raw amino-acid sequence, 104 residues long: Large ribosomal subunit protein uL23 (104 aa).

It belongs to the universal ribosomal protein uL23 family. As to quaternary structure, part of the 50S ribosomal subunit. Contacts protein L29, and trigger factor when it is bound to the ribosome.

Functionally, one of the early assembly proteins it binds 23S rRNA. One of the proteins that surrounds the polypeptide exit tunnel on the outside of the ribosome. Forms the main docking site for trigger factor binding to the ribosome. The chain is Large ribosomal subunit protein uL23 from Paraburkholderia phymatum (strain DSM 17167 / CIP 108236 / LMG 21445 / STM815) (Burkholderia phymatum).